Consider the following 324-residue polypeptide: Probable UDP-sugar transporter protein SLC35A4 (324 aa).

Residues 1 to 18 lie on the Cytoplasmic side of the membrane; the sequence is MSVEDGGMPGLARPKQAR. A helical transmembrane segment spans residues 19–39; that stretch reads WTLMLFLSTAMYGAHAPFLAL. At 40–52 the chain is on the lumenal side; it reads CHVDGRVPFRPSS. The chain crosses the membrane as a helical span at residues 53–73; sequence AVLLTELTKLLLCAFSLLVGW. Residues 74-85 are Cytoplasmic-facing; it reads QTWPQGTPPWRQ. A helical transmembrane segment spans residues 86–106; that stretch reads AAPFALSALLYGANNNLVIYL. Over 107–142 the chain is Lumenal; sequence QRYMDPSTYQVLSNLKIGSTALLYCLCLGHRLSARQ. The helical transmembrane segment at 143–163 threads the bilayer; the sequence is GLALLLLMAAGACYASGGFQE. At 164–180 the chain is on the cytoplasmic side; that stretch reads PGNTLPGPRSAAGARPM. A helical membrane pass occupies residues 181–201; that stretch reads PLHITPLGLLLLILYCLISGL. Residues 202-214 are Lumenal-facing; the sequence is SSVYTELIMKRQR. A helical membrane pass occupies residues 215 to 235; sequence LPLALQNLFLYTFGVILNLGL. The Cytoplasmic portion of the chain corresponds to 236 to 248; the sequence is YAGSGPGPGFLEG. A helical transmembrane segment spans residues 249–271; sequence FSGWAVLVVLNQAVNGLLMSAVM. Topologically, residues 272 to 279 are lumenal; that stretch reads KHGSSITR. A helical membrane pass occupies residues 280 to 300; it reads LFIVSCSLVVNAVLSAVLLQL. Residues 301 to 324 lie on the Cytoplasmic side of the membrane; sequence QLTATFFLAALLIGLAVCLYYGSP.

This sequence belongs to the nucleotide-sugar transporter family. SLC35A subfamily. In terms of assembly, found in a complex with SLC35A2 and SLC35A3. Expressed in the kidney, lung, testis, and prostate. Expressed in the brain by sets of neurons, such as the pyramidal cells of the cortex, the Purkinje cells of the cerebellum, and the motoneurons of the brainstem.

The protein resides in the golgi apparatus membrane. The enzyme catalyses CDP-L-ribitol(in) + CDP(out) = CDP-L-ribitol(out) + CDP(in). Its function is as follows. Mediates the transport of CDP-ribitol. Does not exhibit CMP-sialic acid, UDP-galactose and UDP-N-acetylglucosamine transport activity. The sequence is that of Probable UDP-sugar transporter protein SLC35A4 from Rattus norvegicus (Rat).